A 403-amino-acid polypeptide reads, in one-letter code: Golgin-45 (403 aa).

The segment at 1-63 (MEKMTTLKSS…PRKKVSSDSP (63 aa)) is disordered. The short motif at 22 to 26 (RGAGD) is the Tankyrase-binding motif element. Phosphoserine is present on Ser-53. Residues 123 to 216 (RKELSEVKKV…QLERMSIQCD (94 aa)) are a coiled coil. The residue at position 356 (Ser-356) is a Phosphoserine. Positions 397-403 (QGELIAL) are essential for interaction with GORASP2.

As to quaternary structure, interacts with GORASP2. Interacts with the GTP-bound form of RAB2, but not with other Golgi Rab proteins. Identified in a complex with RAB2 and GORASP2. In terms of processing, ADP-ribosylated by tankyrase TNKS and TNKS2. Poly-ADP-ribosylated protein is recognized by RNF146, followed by ubiquitination. Ubiquitinated by RNF146 when poly-ADP-ribosylated, leading to its degradation.

The protein resides in the golgi apparatus membrane. Functionally, required for normal Golgi structure and for protein transport from the endoplasmic reticulum (ER) through the Golgi apparatus to the cell surface. This chain is Golgin-45 (Blzf1), found in Mus musculus (Mouse).